Here is a 124-residue protein sequence, read N- to C-terminus: Large ribosomal subunit protein bL21 (124 aa).

Belongs to the bacterial ribosomal protein bL21 family. As to quaternary structure, part of the 50S ribosomal subunit. Contacts protein L20.

Its function is as follows. This protein binds to 23S rRNA in the presence of protein L20. This chain is Large ribosomal subunit protein bL21, found in Sinorhizobium medicae (strain WSM419) (Ensifer medicae).